Consider the following 292-residue polypeptide: [LysW]-aminoadipate kinase (292 aa).

Substrate contacts are provided by arginine 89 and asparagine 193.

It belongs to the acetylglutamate kinase family. LysZ subfamily.

The protein localises to the cytoplasm. It catalyses the reaction [amino-group carrier protein]-C-terminal-N-(1,4-dicarboxybutan-1-yl)-L-glutamine + ATP = [amino-group carrier protein]-C-terminal-N-(1-carboxy-5-phosphooxy-5-oxopentan-1-yl)-L-glutamine + ADP. It functions in the pathway amino-acid biosynthesis; L-lysine biosynthesis via AAA pathway; L-lysine from L-alpha-aminoadipate (Thermus route): step 2/5. Its function is as follows. Catalyzes the phosphorylation of LysW-gamma-alpha-aminoadipate. The polypeptide is [LysW]-aminoadipate kinase (Deinococcus radiodurans (strain ATCC 13939 / DSM 20539 / JCM 16871 / CCUG 27074 / LMG 4051 / NBRC 15346 / NCIMB 9279 / VKM B-1422 / R1)).